Here is a 233-residue protein sequence, read N- to C-terminus: uncharacterized protein (233 aa).

This is an uncharacterized protein from Bacillus subtilis (strain 168).